Reading from the N-terminus, the 502-residue chain is TNF receptor-associated factor family protein DDB_G0268444 (502 aa).

An RING-type; degenerate zinc finger spans residues 28–68 (CSICYESVYKKEIYQCKEIHWFCKTCWAESLFKKKECMICR). 2 TRAF-type zinc fingers span residues 129 to 183 (KHLK…SRSL) and 185 to 243 (NHYK…PKSN). The stretch at 261 to 295 (IESQSLQIKETNIKYENLLNKINKLEQLETESKCD) forms a coiled coil. The MATH domain occupies 368–489 (KYKNRWSISN…DDSLVIDFSI (122 aa)).

It belongs to the TNF receptor-associated factor family. A subfamily.

It localises to the cytoplasm. Its function is as follows. Probable adapter protein and signal transducer that links members of the tumor necrosis factor receptor family to different signaling pathways by association with the receptor cytoplasmic domain and kinases. This chain is TNF receptor-associated factor family protein DDB_G0268444, found in Dictyostelium discoideum (Social amoeba).